Here is a 270-residue protein sequence, read N- to C-terminus: Type III pantothenate kinase (270 aa).

11–18 (DAGNSRIK) contributes to the ATP binding site. Residues Y96 and 103-106 (GSDR) contribute to the substrate site. D105 serves as the catalytic Proton acceptor. Residue T129 coordinates ATP. Residue T195 coordinates substrate.

The protein belongs to the type III pantothenate kinase family. In terms of assembly, homodimer. NH4(+) serves as cofactor. Requires K(+) as cofactor.

The protein localises to the cytoplasm. The catalysed reaction is (R)-pantothenate + ATP = (R)-4'-phosphopantothenate + ADP + H(+). Its pathway is cofactor biosynthesis; coenzyme A biosynthesis; CoA from (R)-pantothenate: step 1/5. Its function is as follows. Catalyzes the phosphorylation of pantothenate (Pan), the first step in CoA biosynthesis. In Paraburkholderia phytofirmans (strain DSM 17436 / LMG 22146 / PsJN) (Burkholderia phytofirmans), this protein is Type III pantothenate kinase.